A 142-amino-acid chain; its full sequence is Hemoglobin subunit alpha (142 aa).

The 141-residue stretch at V2 to R142 folds into the Globin domain. Residue S4 is modified to Phosphoserine. An N6-succinyllysine mark is found at K8 and K12. K17 bears the N6-acetyllysine; alternate mark. Residue K17 is modified to N6-succinyllysine; alternate. Residue Y25 is modified to Phosphotyrosine. The residue at position 36 (S36) is a Phosphoserine. N6-succinyllysine is present on K41. Residue S50 is modified to Phosphoserine. H59 serves as a coordination point for O2. H88 contacts heme b. The residue at position 103 (S103) is a Phosphoserine. T109 is modified (phosphothreonine). Phosphoserine is present on residues S112, S125, and S132. 2 positions are modified to phosphothreonine: T135 and T138. Phosphoserine is present on S139.

The protein belongs to the globin family. Heterotetramer of two alpha chains and two beta chains. In terms of tissue distribution, red blood cells.

Involved in oxygen transport from the lung to the various peripheral tissues. In terms of biological role, hemopressin acts as an antagonist peptide of the cannabinoid receptor CNR1. Hemopressin-binding efficiently blocks cannabinoid receptor CNR1 and subsequent signaling. The chain is Hemoglobin subunit alpha (Hba) from Mus musculus (Mouse).